The following is a 420-amino-acid chain: 4-hydroxy-3-methylbut-2-en-1-yl diphosphate synthase (flavodoxin) (420 aa).

Residues C307, C310, C353, and E360 each coordinate [4Fe-4S] cluster.

It belongs to the IspG family. [4Fe-4S] cluster serves as cofactor.

It carries out the reaction (2E)-4-hydroxy-3-methylbut-2-enyl diphosphate + oxidized [flavodoxin] + H2O + 2 H(+) = 2-C-methyl-D-erythritol 2,4-cyclic diphosphate + reduced [flavodoxin]. The protein operates within isoprenoid biosynthesis; isopentenyl diphosphate biosynthesis via DXP pathway; isopentenyl diphosphate from 1-deoxy-D-xylulose 5-phosphate: step 5/6. Converts 2C-methyl-D-erythritol 2,4-cyclodiphosphate (ME-2,4cPP) into 1-hydroxy-2-methyl-2-(E)-butenyl 4-diphosphate. This Brucella suis (strain ATCC 23445 / NCTC 10510) protein is 4-hydroxy-3-methylbut-2-en-1-yl diphosphate synthase (flavodoxin).